Reading from the N-terminus, the 406-residue chain is Tubby-like F-box protein 11 (406 aa).

The F-box domain occupies 53-108 (SCWTQLPPELLREVLARVEESEGWWPRRRDVVACAGVCRSWRGIVREIVRTPEASG).

It belongs to the TUB family. In terms of tissue distribution, ubiquitous.

This is Tubby-like F-box protein 11 (TULP11) from Oryza sativa subsp. japonica (Rice).